The sequence spans 281 residues: Penicillin-insensitive murein endopeptidase (281 aa).

Residues 1–24 (MKQGLIGVLALALGATLLSSAVWA) form the signal peptide. Disulfide bonds link Cys49–Cys270, Cys192–Cys240, and Cys221–Cys228. His115, His118, Asp125, and His216 together coordinate Zn(2+). Positions 230–271 (EQSEPPIGDGCGAELTSWFQPKQPSSEAPEKTTPPPLPPSCQ) are disordered. A compositionally biased stretch (polar residues) spans 246 to 255 (SWFQPKQPSS).

This sequence belongs to the peptidase M74 family. As to quaternary structure, dimer. It depends on Zn(2+) as a cofactor.

The protein resides in the periplasm. Murein endopeptidase that cleaves the D-alanyl-meso-2,6-diamino-pimelyl amide bond that connects peptidoglycan strands. Likely plays a role in the removal of murein from the sacculus. This chain is Penicillin-insensitive murein endopeptidase (mepA), found in Pectobacterium atrosepticum (strain SCRI 1043 / ATCC BAA-672) (Erwinia carotovora subsp. atroseptica).